The sequence spans 261 residues: Indole-3-glycerol phosphate synthase (261 aa).

This sequence belongs to the TrpC family.

It catalyses the reaction 1-(2-carboxyphenylamino)-1-deoxy-D-ribulose 5-phosphate + H(+) = (1S,2R)-1-C-(indol-3-yl)glycerol 3-phosphate + CO2 + H2O. Its pathway is amino-acid biosynthesis; L-tryptophan biosynthesis; L-tryptophan from chorismate: step 4/5. In Burkholderia pseudomallei (strain 668), this protein is Indole-3-glycerol phosphate synthase.